The primary structure comprises 71 residues: SGYSGAALDFPVAPSLAGHYSLTNCGQPSGASKCAEGTVPQAAFEKGTCYRELYASSCHHEETQIFQYPAV.

Residues cysteine 25 and cysteine 34 each contribute to the phycourobilin site. Residue cysteine 49 coordinates (2R,3E)-phycoerythrobilin. Cysteine 58 lines the phycourobilin pocket.

In terms of assembly, heteromer of 6 alpha, 6 beta and 1 gamma chains. Contains four covalently linked bilin chromophores.

It is found in the plastid. Its subcellular location is the chloroplast thylakoid membrane. In terms of biological role, critical for the incorporation of phycoerythrin in the phycobilisome complex. The sequence is that of R-phycoerythrin gamma-1 chain, chloroplastic from Gastroclonium coulteri (Red alga).